The sequence spans 118 residues: Aspartate 1-decarboxylase (118 aa).

The active-site Schiff-base intermediate with substrate; via pyruvic acid is the S25. S25 is subject to Pyruvic acid (Ser). T57 provides a ligand contact to substrate. Catalysis depends on Y58, which acts as the Proton donor. 73–75 (GAA) serves as a coordination point for substrate.

This sequence belongs to the PanD family. As to quaternary structure, heterooctamer of four alpha and four beta subunits. Pyruvate serves as cofactor. In terms of processing, is synthesized initially as an inactive proenzyme, which is activated by self-cleavage at a specific serine bond to produce a beta-subunit with a hydroxyl group at its C-terminus and an alpha-subunit with a pyruvoyl group at its N-terminus.

It localises to the cytoplasm. The catalysed reaction is L-aspartate + H(+) = beta-alanine + CO2. The protein operates within cofactor biosynthesis; (R)-pantothenate biosynthesis; beta-alanine from L-aspartate: step 1/1. Catalyzes the pyruvoyl-dependent decarboxylation of aspartate to produce beta-alanine. This is Aspartate 1-decarboxylase from Hyphomonas neptunium (strain ATCC 15444).